A 189-amino-acid chain; its full sequence is Nucleoside diphosphate kinase 6 (189 aa).

Lys-19, Phe-68, Arg-96, Thr-102, Arg-116, and Asn-126 together coordinate ATP. Catalysis depends on His-129, which acts as the Pros-phosphohistidine intermediate.

It belongs to the NDK family. Mg(2+) serves as cofactor.

It catalyses the reaction a 2'-deoxyribonucleoside 5'-diphosphate + ATP = a 2'-deoxyribonucleoside 5'-triphosphate + ADP. The enzyme catalyses a ribonucleoside 5'-diphosphate + ATP = a ribonucleoside 5'-triphosphate + ADP. In terms of biological role, major role in the synthesis of nucleoside triphosphates other than ATP. The ATP gamma phosphate is transferred to the NDP beta phosphate via a ping-pong mechanism, using a phosphorylated active-site intermediate. This is Nucleoside diphosphate kinase 6 (Nme6) from Mus musculus (Mouse).